A 789-amino-acid polypeptide reads, in one-letter code: Disintegrin and metalloproteinase domain-containing protein 1 (789 aa).

An N-terminal signal peptide occupies residues 1–68; that stretch reads MSVAASASRS…LLIFLPSTLC (68 aa). The Peptidase M12B domain maps to 238–432; that stretch reads KYVEMFVVVN…HRGACLLDRP (195 aa). Asparagine 259 carries N-linked (GlcNAc...) asparagine glycosylation. Intrachain disulfides connect cysteine 348-cysteine 427, cysteine 388-cysteine 411, cysteine 390-cysteine 396, and cysteine 497-cysteine 517. A Zn(2+)-binding site is contributed by histidine 373. Glutamate 374 is an active-site residue. Positions 377 and 383 each coordinate Zn(2+). N-linked (GlcNAc...) asparagine glycosylation is present at asparagine 410. The region spanning 441–525 is the Disintegrin domain; that stretch reads DAHCGNGVVE…ECPANSYMQD (85 aa). N-linked (GlcNAc...) asparagine glycosylation occurs at asparagine 633. Residues 666–700 form the EGF-like domain; sequence LQYDCHPQEMCHGNGVCNNFKHCHCDAGFSPPDCS. 3 disulfides stabilise this stretch: cysteine 670-cysteine 682, cysteine 676-cysteine 688, and cysteine 690-cysteine 699. N-linked (GlcNAc...) asparagine glycosylation is present at asparagine 720. A helical membrane pass occupies residues 743-763; it reads VVVLVVPIFLIVLLCCLMLIA. Topologically, residues 764–789 are cytoplasmic; it reads YLWSEVQEAVSPGSSSTTSSSESESD.

In terms of assembly, heterodimer with ADAM2/fertilin subunit beta.

It is found in the membrane. Its function is as follows. May be involved in sperm-egg fusion. The polypeptide is Disintegrin and metalloproteinase domain-containing protein 1 (Adam1) (Rattus norvegicus (Rat)).